The sequence spans 237 residues: RNA polymerase sigma-28 factor (237 aa).

The propeptide occupies 1–19; it reads MSLFAAIGYMVREVFVFVS. The Polymerase core binding signature appears at 77 to 90; it reads DLISIGTIGLIKAI. Residues 197 to 206 constitute a DNA-binding region (H-T-H motif); that stretch reads QREIAKALGI.

It belongs to the sigma-70 factor family. Post-translationally, proteolytically cleaved in the N-terminus probably by a SpoIIGA homolog to yield the active peptide.

Sigma factors are initiation factors that promote the attachment of RNA polymerase to specific initiation sites and are then released. This sigma factor directs the transcription of crystal protein genes, a sporulation-regulated event. The sequence is that of RNA polymerase sigma-28 factor (sigK) from Bacillus thuringiensis subsp. kurstaki.